Reading from the N-terminus, the 171-residue chain is Co-chaperone protein HscB homolog (171 aa).

A J domain is found at 2–69 (NHFELFDLPV…DSRAAYLLSL (68 aa)).

It belongs to the HscB family. As to quaternary structure, interacts with HscA and stimulates its ATPase activity.

Co-chaperone involved in the maturation of iron-sulfur cluster-containing proteins. Seems to help targeting proteins to be folded toward HscA. The protein is Co-chaperone protein HscB homolog of Acinetobacter baylyi (strain ATCC 33305 / BD413 / ADP1).